The sequence spans 623 residues: Chaperone protein DnaK (623 aa).

Position 175 is a phosphothreonine; by autocatalysis (threonine 175). The disordered stretch occupies residues 578–623 (ANPEGAPGAGFDPNNMGGANAGNASAGNDKKDDNVVDADFKVEDDK). Low complexity predominate over residues 591–604 (NNMGGANAGNASAG). A compositionally biased stretch (basic and acidic residues) spans 605–623 (NDKKDDNVVDADFKVEDDK).

It belongs to the heat shock protein 70 family.

In terms of biological role, acts as a chaperone. This is Chaperone protein DnaK from Clostridium botulinum (strain 657 / Type Ba4).